We begin with the raw amino-acid sequence, 488 residues long: Ammonium transporter 1 member 1 (488 aa).

The next 11 helical transmembrane spans lie at 47 to 69 (TYLL…LLAG), 90 to 109 (LFYY…NGFI), 129 to 148 (FLYQ…GSIA), 153 to 175 (FVAY…SHWF), 195 to 217 (VIDF…YGAL), 238 to 257 (HSAS…WYGF), 281 to 303 (AVGR…TLFG), 316 to 333 (VCNG…GCSV), 337 to 356 (WAAI…FNML), 368 to 387 (AAQL…GLFA), and 418 to 440 (HIIQ…FYIL).

It belongs to the ammonia transporter channel (TC 1.A.11.2) family. In terms of tissue distribution, root hairs and leaves.

It is found in the membrane. Functionally, ammonium transporter that may be involved in ammonium uptake from the soil. This is Ammonium transporter 1 member 1 (AMT1-1) from Solanum lycopersicum (Tomato).